We begin with the raw amino-acid sequence, 63 residues long: Small ribosomal subunit protein eS17 (63 aa).

It belongs to the eukaryotic ribosomal protein eS17 family.

In Methanococcus vannielii (strain ATCC 35089 / DSM 1224 / JCM 13029 / OCM 148 / SB), this protein is Small ribosomal subunit protein eS17.